Here is a 273-residue protein sequence, read N- to C-terminus: Shikimate dehydrogenase (NADP(+)) (273 aa).

Residues 14–16 and Thr-61 each bind shikimate; that span reads SKS. The active-site Proton acceptor is the Lys-65. Residues Asn-86 and Asp-102 each coordinate shikimate. Residues 126–130, 150–155, and Met-213 each bind NADP(+); these read GAGGA and NRTVAK. Tyr-215 is a binding site for shikimate. Gly-237 provides a ligand contact to NADP(+).

It belongs to the shikimate dehydrogenase family. In terms of assembly, homodimer.

The enzyme catalyses shikimate + NADP(+) = 3-dehydroshikimate + NADPH + H(+). The protein operates within metabolic intermediate biosynthesis; chorismate biosynthesis; chorismate from D-erythrose 4-phosphate and phosphoenolpyruvate: step 4/7. Involved in the biosynthesis of the chorismate, which leads to the biosynthesis of aromatic amino acids. Catalyzes the reversible NADPH linked reduction of 3-dehydroshikimate (DHSA) to yield shikimate (SA). This chain is Shikimate dehydrogenase (NADP(+)), found in Tolumonas auensis (strain DSM 9187 / NBRC 110442 / TA 4).